A 462-amino-acid chain; its full sequence is Annexin A7 (462 aa).

The segment at 1 to 130 is disordered; the sequence is MSYPPNQGYP…QGYPPQQGYP (130 aa). The segment at 7–131 is 19 X 6 AA tandem repeats of Q-G-Y-P-P-Q; it reads QGYPPQSNSP…GYPPQQGYPP (125 aa). Residues 16–130 show a composition bias toward low complexity; sequence PQPGQYGAPQ…QGYPPQQGYP (115 aa). Annexin repeat units lie at residues 161 to 232, 233 to 304, 315 to 388, and 392 to 462; these read HDCK…ALLT, EPAH…KLTE, MQVS…AIVT, and NPYG…DIIS.

This sequence belongs to the annexin family.

Functionally, calcium/phospholipid-binding protein which promotes membrane fusion and is involved in exocytosis. The protein is Annexin A7 (nxnA) of Dictyostelium discoideum (Social amoeba).